The following is an 89-amino-acid chain: Small ribosomal subunit protein uS17 (89 aa).

It belongs to the universal ribosomal protein uS17 family. In terms of assembly, part of the 30S ribosomal subunit.

Its function is as follows. One of the primary rRNA binding proteins, it binds specifically to the 5'-end of 16S ribosomal RNA. The polypeptide is Small ribosomal subunit protein uS17 (Delftia acidovorans (strain DSM 14801 / SPH-1)).